Consider the following 876-residue polypeptide: Pre-mRNA-splicing factor ATP-dependent RNA helicase-like protein PRP2 (876 aa).

Residues 1-111 (MSSITSETGK…KGLLGDSENE (111 aa)) form a disordered region. An N-acetylserine modification is found at serine 2. Positions 61–70 (VFSNTNQGPE) are enriched in polar residues. The Helicase ATP-binding domain occupies 233 to 399 (LQEIKKNQVL…FDNCPIFNVP (167 aa)). ATP is bound at residue 246–253 (GETGSGKT). The DEAH box motif lies at 346–349 (DEAH). Residues 424–598 (TIFQIHTTQS…NTVLLLLSLG (175 aa)) form the Helicase C-terminal domain.

The protein belongs to the DEAD box helicase family. DEAH subfamily. In terms of assembly, interacts directly with pre-mRNA. According to PubMed:2251118, associated with spliceosomes prior to and throughout step 1 of the splicing reaction. According to PubMed:8943336, it leaves the spliceosome before reaction 1. Interacts with SPP2.

The protein localises to the nucleus. The catalysed reaction is ATP + H2O = ADP + phosphate + H(+). Its function is as follows. Involved in pre-mRNA splicing. Is required together with ATP and at least one other factor, for the first cleavage-ligation reaction. Functions as a molecular motor in the activation of the precatalytic spliceosome for the first transesterification reaction of pre-mRNA splicing by hydrolyzing ATP to cause the activation of the spliceosome without the occurrence of splicing. Capable of hydrolyzing nucleoside triphosphates in the presence of single-stranded RNAs such as poly(U). The protein is Pre-mRNA-splicing factor ATP-dependent RNA helicase-like protein PRP2 (PRP2) of Saccharomyces cerevisiae (strain ATCC 204508 / S288c) (Baker's yeast).